A 298-amino-acid chain; its full sequence is Tyrosine recombinase XerC (298 aa).

Residues 1 to 84 enclose the Core-binding (CB) domain; it reads MNHIQEAFLN…TLRTFYEYWM (84 aa). One can recognise a Tyr recombinase domain in the interval 105–286; that stretch reads YLPQFFYEEE…SNQQLRKVYL (182 aa). Active-site residues include Arg-145, Lys-169, His-238, Arg-241, and His-264. Tyr-273 functions as the O-(3'-phospho-DNA)-tyrosine intermediate in the catalytic mechanism.

Belongs to the 'phage' integrase family. XerC subfamily. As to quaternary structure, forms a cyclic heterotetrameric complex composed of two molecules of XerC and two molecules of XerD.

It is found in the cytoplasm. In terms of biological role, site-specific tyrosine recombinase, which acts by catalyzing the cutting and rejoining of the recombining DNA molecules. The XerC-XerD complex is essential to convert dimers of the bacterial chromosome into monomers to permit their segregation at cell division. It also contributes to the segregational stability of plasmids. The polypeptide is Tyrosine recombinase XerC (Staphylococcus aureus (strain MRSA252)).